Here is a 203-residue protein sequence, read N- to C-terminus: MEKTREGEIRRETKETDVFVKIDLDGSGKCSANTGIGFLDHMIQQLSSHGLFDIEVRANGDTHIDDHHTNEDVGIAIGQALSKALGDRVGIKRFGHFLAPLDEALIQVVVDCSGRPHLSFSLDIPSQKVGTYDTELVKEFFGAVVSNGGLTLHIRQLAGNNTHHIIEATFKSFARALRMATEIDPRRSSQIPSSKGVLEQAGQ.

The disordered stretch occupies residues 184-203 (DPRRSSQIPSSKGVLEQAGQ).

Belongs to the imidazoleglycerol-phosphate dehydratase family.

The protein resides in the cytoplasm. It catalyses the reaction D-erythro-1-(imidazol-4-yl)glycerol 3-phosphate = 3-(imidazol-4-yl)-2-oxopropyl phosphate + H2O. The protein operates within amino-acid biosynthesis; L-histidine biosynthesis; L-histidine from 5-phospho-alpha-D-ribose 1-diphosphate: step 6/9. The protein is Imidazoleglycerol-phosphate dehydratase of Prochlorococcus marinus (strain NATL1A).